Reading from the N-terminus, the 122-residue chain is UPF0145 protein TV0671 (122 aa).

Belongs to the UPF0145 family.

The polypeptide is UPF0145 protein TV0671 (Thermoplasma volcanium (strain ATCC 51530 / DSM 4299 / JCM 9571 / NBRC 15438 / GSS1)).